A 259-amino-acid polypeptide reads, in one-letter code: Zinc import ATP-binding protein ZnuC (259 aa).

One can recognise an ABC transporter domain in the interval Val-22 to His-238. Gly-54–Ser-61 is a binding site for ATP.

Belongs to the ABC transporter superfamily. Zinc importer (TC 3.A.1.15.5) family. In terms of assembly, the complex is composed of two ATP-binding proteins (ZnuC), two transmembrane proteins (ZnuB) and a solute-binding protein (ZnuA).

The protein resides in the cell inner membrane. It catalyses the reaction Zn(2+)(out) + ATP(in) + H2O(in) = Zn(2+)(in) + ADP(in) + phosphate(in) + H(+)(in). In terms of biological role, part of the ABC transporter complex ZnuABC involved in zinc import. Responsible for energy coupling to the transport system. This Alkalilimnicola ehrlichii (strain ATCC BAA-1101 / DSM 17681 / MLHE-1) protein is Zinc import ATP-binding protein ZnuC.